A 380-amino-acid chain; its full sequence is Cytochrome b (380 aa).

4 consecutive transmembrane segments (helical) span residues 33–53, 77–98, 113–133, and 178–198; these read FGSLLGICLMVQIITGLFLAM, WLIRYMHANGASMFFICLFIHV, WNIGIALFLTTMATAFVGYVL, and FFAFHFILPFIITAFVLVHLL. Heme b contacts are provided by His-83 and His-97. The heme b site is built by His-182 and His-196. His-201 lines the a ubiquinone pocket. Transmembrane regions (helical) follow at residues 226–246, 288–308, 320–340, and 347–367; these read IKDILGILMLLMVLMILVLFF, LGGVTALILSILILAMFPLIN, ITQAMYWIFIANLFILTWIGG, and FTMIGLISSILYFSIIVMFMF.

It belongs to the cytochrome b family. In terms of assembly, the cytochrome bc1 complex contains 11 subunits: 3 respiratory subunits (MT-CYB, CYC1 and UQCRFS1), 2 core proteins (UQCRC1 and UQCRC2) and 6 low-molecular weight proteins (UQCRH/QCR6, UQCRB/QCR7, UQCRQ/QCR8, UQCR10/QCR9, UQCR11/QCR10 and a cleavage product of UQCRFS1). This cytochrome bc1 complex then forms a dimer. It depends on heme b as a cofactor.

The protein resides in the mitochondrion inner membrane. Component of the ubiquinol-cytochrome c reductase complex (complex III or cytochrome b-c1 complex) that is part of the mitochondrial respiratory chain. The b-c1 complex mediates electron transfer from ubiquinol to cytochrome c. Contributes to the generation of a proton gradient across the mitochondrial membrane that is then used for ATP synthesis. The chain is Cytochrome b (MT-CYB) from Calomys musculinus (Drylands vesper mouse).